The primary structure comprises 118 residues: UPF0148 protein M1627_1409 (118 aa).

This sequence belongs to the UPF0148 family.

The polypeptide is UPF0148 protein M1627_1409 (Saccharolobus islandicus (strain M.16.27) (Sulfolobus islandicus)).